A 503-amino-acid chain; its full sequence is MRYDVVIAGAGPTGLMLACELRLAGARTLVLERLAERVDFSKALGVHARTVELLDMRGLGRGFQAEAPKLRGGNFASLGVPLDFSSFDTRHPYALFVPQVRTETLLTGRALELGAELRRGHAVTALEQDADGVTVSVTGPEGPYEVECAYLVGCDGGGITVRKLLGIDFPGQDPHMFAVIADARFREELPHGEGMGPMRPYGVMRHDLRAWFAAFPLEPDVYRATVAFFDRPYADRRAPVTEEDVRAALTEVAGSDFGMHDVRWLSRLTDTSRQAERYRDGRVLLAGDACHIHLPAGGQGLNLGFQDAVNLGWKLGATIAGTAPPELLDTYEAERRPIAAGVLRNTRAQAVLIDPDPRYEGLRELMIELLHVPETNRYLAGLISALDVRYPMAGEHPLLGRRVPDLPLVTEDGTRQLSTYFHAARGVLLTLGCDQPLADEAAAWKDRVDLVAAEGVADPGSAVDGLTALLVRPDGYICWTAAPETGTDGLTDALRTWFGPPAM.

The protein belongs to the PheA/TfdB FAD monooxygenase family. The cofactor is FAD.

The catalysed reaction is anhydrotetracycline + NADPH + O2 + H(+) = 5a,11a-dehydrotetracycline + NADP(+) + H2O. It functions in the pathway antibiotic biosynthesis; oxytetracycline biosynthesis. Its function is as follows. Catalyzes hydroxylation of the anthracycline structure at position C-6 during the biosynthesis of oxytetracyline. The protein is Anhydrotetracycline monooxygenase of Streptomyces rimosus.